The primary structure comprises 94 residues: Small ribosomal subunit protein bS18 (94 aa).

The segment covering 1–12 has biased composition (low complexity); it reads MSEQNSRPQNSE. Residues 1–29 are disordered; that stretch reads MSEQNSRPQNSERPQRSRRPQGGPRRRRK. The segment covering 16-29 has biased composition (basic residues); it reads RSRRPQGGPRRRRK.

It belongs to the bacterial ribosomal protein bS18 family. Part of the 30S ribosomal subunit. Forms a tight heterodimer with protein bS6.

Functionally, binds as a heterodimer with protein bS6 to the central domain of the 16S rRNA, where it helps stabilize the platform of the 30S subunit. This is Small ribosomal subunit protein bS18 from Leuconostoc citreum (strain KM20).